The chain runs to 354 residues: Arginase-2, mitochondrial (354 aa).

The transit peptide at 1 to 22 directs the protein to the mitochondrion; that stretch reads MFLRSSASRLLHGQIPCVLTRS. H120, D143, H145, and D147 together coordinate Mn(2+). Substrate-binding positions include 145 to 149, 156 to 158, and E202; these read HADIN and SGN. 2 residues coordinate Mn(2+): D251 and D253. T265 and E296 together coordinate substrate.

The protein belongs to the arginase family. As to quaternary structure, homotrimer. Requires Mn(2+) as cofactor.

The protein resides in the mitochondrion. The enzyme catalyses L-arginine + H2O = urea + L-ornithine. It participates in nitrogen metabolism; urea cycle; L-ornithine and urea from L-arginine: step 1/1. May play a role in the regulation of extra-urea cycle arginine metabolism and also in down-regulation of nitric oxide synthesis. Extrahepatic arginase functions to regulate L-arginine bioavailability to nitric oxid synthase (NOS). Arginine metabolism is a critical regulator of innate and adaptive immune responses. Seems to be involved in negative regulation of the survival capacity of activated CD4(+) and CD8(+) T cells. May suppress inflammation-related signaling in asthmatic airway epithelium. May contribute to the immune evasion of H.pylori by restricting M1 macrophage activation and polyamine metabolism. May play a role in promoting prenatal immune suppression. Regulates RPS6KB1 signaling, which promotes endothelial cell senescence and inflammation and implicates NOS3/eNOS dysfunction. Can inhibit endothelial autophagy independently of its enzymatic activity implicating mTORC2 signaling. Involved in vascular smooth muscle cell senescence and apoptosis independently of its enzymatic activity. This Mus musculus (Mouse) protein is Arginase-2, mitochondrial (Arg2).